A 123-amino-acid chain; its full sequence is Small ribosomal subunit protein uS12 (123 aa).

The disordered stretch occupies residues 1 to 45 (MPTINQLIRKKRQSGATRKKSPALQKSPQKRGVCLQVKTKTPKKP). The segment covering 8-21 (IRKKRQSGATRKKS) has biased composition (basic residues).

This sequence belongs to the universal ribosomal protein uS12 family. Part of the 30S ribosomal subunit. Contacts proteins S8 and S17. May interact with IF1 in the 30S initiation complex.

With S4 and S5 plays an important role in translational accuracy. In terms of biological role, interacts with and stabilizes bases of the 16S rRNA that are involved in tRNA selection in the A site and with the mRNA backbone. Located at the interface of the 30S and 50S subunits, it traverses the body of the 30S subunit contacting proteins on the other side and probably holding the rRNA structure together. The combined cluster of proteins S8, S12 and S17 appears to hold together the shoulder and platform of the 30S subunit. In Chlamydia muridarum (strain MoPn / Nigg), this protein is Small ribosomal subunit protein uS12.